The sequence spans 37 residues: Large ribosomal subunit protein bL36 (37 aa).

It belongs to the bacterial ribosomal protein bL36 family.

This chain is Large ribosomal subunit protein bL36, found in Nitratidesulfovibrio vulgaris (strain DSM 19637 / Miyazaki F) (Desulfovibrio vulgaris).